The following is a 701-amino-acid chain: Elongation factor G (701 aa).

A tr-type G domain is found at 6 to 285 (HKVRNIGIMA…AVVAYLPNPL (280 aa)). GTP-binding positions include 15 to 22 (AHIDAGKT), 79 to 83 (DNPGH), and 133 to 136 (NKMD).

The protein belongs to the TRAFAC class translation factor GTPase superfamily. Classic translation factor GTPase family. EF-G/EF-2 subfamily.

The protein localises to the cytoplasm. In terms of biological role, catalyzes the GTP-dependent ribosomal translocation step during translation elongation. During this step, the ribosome changes from the pre-translocational (PRE) to the post-translocational (POST) state as the newly formed A-site-bound peptidyl-tRNA and P-site-bound deacylated tRNA move to the P and E sites, respectively. Catalyzes the coordinated movement of the two tRNA molecules, the mRNA and conformational changes in the ribosome. The polypeptide is Elongation factor G (fusA) (Micrococcus luteus (Micrococcus lysodeikticus)).